Here is a 538-residue protein sequence, read N- to C-terminus: Histone-arginine methyltransferase CARMER (538 aa).

In terms of domain architecture, SAM-dependent MTase PRMT-type spans 148–457 (ASQYFQFYGY…QSYDVTIDLH (310 aa)). S-adenosyl-L-methionine contacts are provided by Gln161, Arg170, Gly194, Glu216, Glu245, and Thr273. Arg508 is subject to Asymmetric dimethylarginine; by autocatalysis.

Belongs to the class I-like SAM-binding methyltransferase superfamily. Protein arginine N-methyltransferase family. Homodimer. The dimethylated protein is the major form.

The protein localises to the cytoplasm. Its subcellular location is the nucleus. The catalysed reaction is L-arginyl-[protein] + 2 S-adenosyl-L-methionine = N(omega),N(omega)-dimethyl-L-arginyl-[protein] + 2 S-adenosyl-L-homocysteine + 2 H(+). Methylates (mono- and asymmetric dimethylation) the guanidino nitrogens of arginyl residues in proteins. May methylate histone H3 at 'Arg-17' and activate transcription via chromatin remodeling. The protein is Histone-arginine methyltransferase CARMER (Art4) of Drosophila virilis (Fruit fly).